A 50-amino-acid chain; its full sequence is MLTKYALVAVIVLCLTVLGFTLLVGDSLCEFTVKERNIEFKAVLAYEPKK.

Residues 5-25 (YALVAVIVLCLTVLGFTLLVG) form a helical membrane-spanning segment.

Belongs to the Hok/Gef family.

It localises to the cell inner membrane. In terms of biological role, toxic component of a type I toxin-antitoxin (TA) system. When overexpressed kills cells within minutes; causes collapse of the transmembrane potential and arrest of respiration. Its toxic effect is probably neutralized by an antisense antitoxin Sok RNA. This chain is Protein HokE (hokE), found in Escherichia coli O157:H7.